Here is a 161-residue protein sequence, read N- to C-terminus: Endoribonuclease YbeY (161 aa).

Zn(2+) contacts are provided by H121, H125, and H131.

It belongs to the endoribonuclease YbeY family. Requires Zn(2+) as cofactor.

Its subcellular location is the cytoplasm. Functionally, single strand-specific metallo-endoribonuclease involved in late-stage 70S ribosome quality control and in maturation of the 3' terminus of the 16S rRNA. This is Endoribonuclease YbeY from Xanthomonas axonopodis pv. citri (strain 306).